Reading from the N-terminus, the 86-residue chain is Small ribosomal subunit protein bS20 (86 aa).

Residues 1–11 (MANIKQQKKRN) are compositionally biased toward basic residues. Positions 1-21 (MANIKQQKKRNKTNEKRRLQN) are disordered.

The protein belongs to the bacterial ribosomal protein bS20 family.

Binds directly to 16S ribosomal RNA. The sequence is that of Small ribosomal subunit protein bS20 from Onion yellows phytoplasma (strain OY-M).